The sequence spans 250 residues: ATP synthase subunit a (250 aa).

Transmembrane regions (helical) follow at residues 31–51 (SAYM…GMAG), 85–105 (FFPL…IGII), 115–135 (LIVT…YGLY), 144–164 (LFVP…IEVI), 194–214 (FVGM…LPLG), and 217–237 (VAVT…FTIL).

Belongs to the ATPase A chain family. As to quaternary structure, F-type ATPases have 2 components, CF(1) - the catalytic core - and CF(0) - the membrane proton channel. CF(1) has five subunits: alpha(3), beta(3), gamma(1), delta(1), epsilon(1). CF(0) has four main subunits: a, b, b' and c.

Its subcellular location is the cell inner membrane. Key component of the proton channel; it plays a direct role in the translocation of protons across the membrane. This is ATP synthase subunit a from Rhodopseudomonas palustris (strain BisB5).